The chain runs to 637 residues: Transcription factor GLABRA 3 (637 aa).

Residues 437–486 (DETGNHAVLEKKRREKLNERFMTLRKIIPSINKIDKVSILDDTIEYLQEL) form the bHLH domain. The disordered stretch occupies residues 497-521 (RESTDTETRGTMTMKRKKPCDAGER). Positions 541-637 (NVGEAEPADT…EALQRVAWIC (97 aa)) are binding with MYB0/GL1 and MYB23.

In terms of assembly, efficient DNA binding requires dimerization with another bHLH protein. Homodimer and heterodimer with BHLH2. Interacts directly with TTG1 and MYB0/GL1 to form a complex. Its interaction with TRY prevents MYB0/GL1 binding. Interacts with MYB75/PAP1, MYB90/PAP2, TT2, CPC, MYB23 and MYB66/WER. Interacts with MYB82. Mostly expressed in roots and flowers. Also present in stems and leaves, and, to a lower extent, in hypocotyls. Expressed in epidermal root hair cells (trichoblasts) and moves to root hairless cells (atrichoblasts) by a cell-to-cell movement through plasmodesmata (at protein level).

Its subcellular location is the nucleus. Transcription activator, when associated with MYB75/PAP1, MYB90/PAP2 or TT2. Involved in epidermal cell fate specification. Negatively regulates stomata formation, but, in association with TTG1 and MYB0/GL1, promotes trichome formation, branching and endoreplication. Also regulates trichome cell wall maturation. Together with MYB66/WER, promotes the formation of non-hair cells in root epidermis cells in the N position. Whereas together with CPC, promotes the formation of hair cells in root epidermis cells in the H position by inhibiting non-hair cell formation. Also seems to play a role in the activation of anthocyanin biosynthesis, probably together with MYB75/PAP1. Activates the transcription of GL2. This Arabidopsis thaliana (Mouse-ear cress) protein is Transcription factor GLABRA 3 (GL3).